We begin with the raw amino-acid sequence, 213 residues long: Kynurenine formamidase (213 aa).

Residue Trp-20 participates in substrate binding. 3 residues coordinate Zn(2+): His-50, His-54, and Asp-56. His-60 serves as the catalytic Proton donor/acceptor. Zn(2+)-binding residues include His-161 and Glu-173.

It belongs to the Cyclase 1 superfamily. KynB family. In terms of assembly, homodimer. Zn(2+) serves as cofactor.

It carries out the reaction N-formyl-L-kynurenine + H2O = L-kynurenine + formate + H(+). The protein operates within amino-acid degradation; L-tryptophan degradation via kynurenine pathway; L-kynurenine from L-tryptophan: step 2/2. Functionally, catalyzes the hydrolysis of N-formyl-L-kynurenine to L-kynurenine, the second step in the kynurenine pathway of tryptophan degradation. The polypeptide is Kynurenine formamidase (Pseudomonas aeruginosa (strain UCBPP-PA14)).